The sequence spans 88 residues: Elongation factor 1-beta (88 aa).

The protein belongs to the EF-1-beta/EF-1-delta family.

In terms of biological role, promotes the exchange of GDP for GTP in EF-1-alpha/GDP, thus allowing the regeneration of EF-1-alpha/GTP that could then be used to form the ternary complex EF-1-alpha/GTP/AAtRNA. The polypeptide is Elongation factor 1-beta (ef1b) (Thermoplasma volcanium (strain ATCC 51530 / DSM 4299 / JCM 9571 / NBRC 15438 / GSS1)).